Reading from the N-terminus, the 423-residue chain is AP-1 complex subunit mu-1 (423 aa).

N-acetylserine is present on serine 2. Phosphothreonine is present on residues threonine 152, threonine 154, and threonine 223. In terms of domain architecture, MHD spans 168-421; the sequence is KNEVFLDVIE…ITQNGDYQLR (254 aa).

The protein belongs to the adaptor complexes medium subunit family. As to quaternary structure, adaptor protein complex 1 (AP-1) is a heterotetramer composed of two large adaptins (gamma-type subunit AP1G1 and beta-type subunit AP1B1), a medium adaptin (mu-type subunit AP1M1 or AP1M2) and a small adaptin (sigma-type subunit AP1S1 or AP1S2 or AP1S3). Interacts with MARCHF11. Phosphorylation of membrane-bound AP1M1/AP1M2 increases its affinity for sorting signals.

It is found in the cytoplasmic vesicle. It localises to the clathrin-coated vesicle membrane. Its subcellular location is the golgi apparatus. In terms of biological role, subunit of clathrin-associated adaptor protein complex 1 that plays a role in protein sorting in the trans-Golgi network (TGN) and endosomes. The AP complexes mediate the recruitment of clathrin to membranes and the recognition of sorting signals within the cytosolic tails of transmembrane cargo molecules. This chain is AP-1 complex subunit mu-1, found in Rattus norvegicus (Rat).